A 419-amino-acid chain; its full sequence is Tryptophan synthase beta chain (419 aa).

At lysine 86 the chain carries N6-(pyridoxal phosphate)lysine. The segment covering 394–403 has biased composition (basic and acidic residues); that stretch reads VEQQKVEQQK. The disordered stretch occupies residues 394 to 419; it reads VEQQKVEQQKADNQNTEKNNQESGNE. Polar residues predominate over residues 404 to 419; sequence ADNQNTEKNNQESGNE.

It belongs to the TrpB family. As to quaternary structure, tetramer of two alpha and two beta chains. The cofactor is pyridoxal 5'-phosphate.

It catalyses the reaction (1S,2R)-1-C-(indol-3-yl)glycerol 3-phosphate + L-serine = D-glyceraldehyde 3-phosphate + L-tryptophan + H2O. It participates in amino-acid biosynthesis; L-tryptophan biosynthesis; L-tryptophan from chorismate: step 5/5. Its function is as follows. The beta subunit is responsible for the synthesis of L-tryptophan from indole and L-serine. This is Tryptophan synthase beta chain from Shewanella halifaxensis (strain HAW-EB4).